Here is a 251-residue protein sequence, read N- to C-terminus: Probable transcriptional regulatory protein CC_3243 (251 aa).

It belongs to the TACO1 family.

Its subcellular location is the cytoplasm. This is Probable transcriptional regulatory protein CC_3243 from Caulobacter vibrioides (strain ATCC 19089 / CIP 103742 / CB 15) (Caulobacter crescentus).